Here is a 226-residue protein sequence, read N- to C-terminus: Peroxiredoxin-like 2C (226 aa).

Residues 1-24 (MAAPVTRQVSGCAGRVPSPAGSVT) are disordered.

Belongs to the peroxiredoxin-like PRXL2 family. PRXL2C subfamily.

Its function is as follows. May positively regulate ERK1/2 signaling and AKT1 activation leading to HIF1A up-regulation with an increased expression of glycolysis genes and enhanced glycolysis. In Mus musculus (Mouse), this protein is Peroxiredoxin-like 2C (Prxl2c).